The primary structure comprises 399 residues: MASKKLHGRDFYNKIGRPKRILAPMVDQSELPWRILARRSGADLCYSPMFHSRLFGESEDYRNKVFSTRTIPEERPLIIQFCGNDPEIMLKAAKIAAPYCDAVDVNLGCPQGIAKKGKYGSFLQENWNLIESIITKLHTELSIPVTAKIRIFPDPQKTLDYAKMILKAGASILAVHGRLREQKGHFTGIADWEQIQMLRKNLPSETVLFANGNILHAQDIDRCIKYTGVDGVLSAEGSLYNPRIFLPPSSPLMTLYPRIDDMCEEYLNIIREFKLESDYSSLSAIKGHLFKLMRPLLSIHTDIRSKLAQGCTPRDFETFPPVVAMLRKRLLECEEKGEINEDKDVKESVKDSMGYPVIPWWRVQPYIRPLEVPLVTKRKPVEVTADEGPVKKKVNASVA.

Residues 24-26 (PMV) and Gln-80 each bind FMN. The active-site Proton donor is Cys-109. Residues Lys-148, His-176, 211 to 213 (NGN), and 235 to 236 (AE) each bind FMN.

Belongs to the Dus family. Dus1 subfamily. It depends on FMN as a cofactor.

The protein resides in the nucleus. The protein localises to the mitochondrion. It carries out the reaction 5,6-dihydrouridine(16) in tRNA + NADP(+) = uridine(16) in tRNA + NADPH + H(+). It catalyses the reaction 5,6-dihydrouridine(16) in tRNA + NAD(+) = uridine(16) in tRNA + NADH + H(+). The enzyme catalyses 5,6-dihydrouridine(17) in tRNA + NAD(+) = uridine(17) in tRNA + NADH + H(+). The catalysed reaction is 5,6-dihydrouridine(17) in tRNA + NADP(+) = uridine(17) in tRNA + NADPH + H(+). It carries out the reaction a 5,6-dihydrouridine in mRNA + NAD(+) = a uridine in mRNA + NADH + H(+). It catalyses the reaction a 5,6-dihydrouridine in mRNA + NADP(+) = a uridine in mRNA + NADPH + H(+). Catalyzes the synthesis of dihydrouridine, a modified base found in the D-loop of most tRNAs. Also able to mediate dihydrouridylation of some mRNAs, thereby affecting their translation. This chain is tRNA-dihydrouridine(16/17) synthase [NAD(P)(+)], found in Schizosaccharomyces pombe (strain 972 / ATCC 24843) (Fission yeast).